Here is a 708-residue protein sequence, read N- to C-terminus: DNA ligase (708 aa).

NAD(+)-binding positions include 35–39 (DADYD), 84–85 (SL), and E118. K120 (N6-AMP-lysine intermediate) is an active-site residue. Residues R141, E182, K303, and K327 each contribute to the NAD(+) site. Residues C419, C422, C437, and C443 each coordinate Zn(2+). Residues 628 to 708 (TRASEVSGKT…GWAKIVADAQ (81 aa)) form the BRCT domain.

The protein belongs to the NAD-dependent DNA ligase family. LigA subfamily. Mg(2+) is required as a cofactor. The cofactor is Mn(2+).

The catalysed reaction is NAD(+) + (deoxyribonucleotide)n-3'-hydroxyl + 5'-phospho-(deoxyribonucleotide)m = (deoxyribonucleotide)n+m + AMP + beta-nicotinamide D-nucleotide.. DNA ligase that catalyzes the formation of phosphodiester linkages between 5'-phosphoryl and 3'-hydroxyl groups in double-stranded DNA using NAD as a coenzyme and as the energy source for the reaction. It is essential for DNA replication and repair of damaged DNA. The protein is DNA ligase of Rhizorhabdus wittichii (strain DSM 6014 / CCUG 31198 / JCM 15750 / NBRC 105917 / EY 4224 / RW1) (Sphingomonas wittichii).